Reading from the N-terminus, the 223-residue chain is Ribose-5-phosphate isomerase A (223 aa).

Residues Thr29–Thr32, Asp82–Asp85, and Lys95–Gly98 each bind substrate. Glu104 functions as the Proton acceptor in the catalytic mechanism. A substrate-binding site is contributed by Lys122.

This sequence belongs to the ribose 5-phosphate isomerase family. As to quaternary structure, homodimer.

The catalysed reaction is aldehydo-D-ribose 5-phosphate = D-ribulose 5-phosphate. The protein operates within carbohydrate degradation; pentose phosphate pathway; D-ribose 5-phosphate from D-ribulose 5-phosphate (non-oxidative stage): step 1/1. In terms of biological role, catalyzes the reversible conversion of ribose-5-phosphate to ribulose 5-phosphate. This chain is Ribose-5-phosphate isomerase A, found in Neisseria meningitidis serogroup B (strain ATCC BAA-335 / MC58).